The sequence spans 246 residues: Isoprenyl transferase 1 (246 aa).

Aspartate 19 is an active-site residue. Mg(2+) is bound at residue aspartate 19. Substrate contacts are provided by residues 20-23 (GNGR), tryptophan 24, arginine 32, histidine 36, and 64-66 (STD). Catalysis depends on asparagine 67, which acts as the Proton acceptor. Substrate-binding positions include tryptophan 68, arginine 70, arginine 180, and 186–188 (RLS). Glutamate 199 provides a ligand contact to Mg(2+).

Belongs to the UPP synthase family. In terms of assembly, homodimer. Mg(2+) is required as a cofactor.

Its function is as follows. Catalyzes the condensation of isopentenyl diphosphate (IPP) with allylic pyrophosphates generating different type of terpenoids. This chain is Isoprenyl transferase 1, found in Bradyrhizobium diazoefficiens (strain JCM 10833 / BCRC 13528 / IAM 13628 / NBRC 14792 / USDA 110).